Consider the following 155-residue polypeptide: Small ribosomal subunit protein uS7 (155 aa).

It belongs to the universal ribosomal protein uS7 family. In terms of assembly, part of the 30S ribosomal subunit. Contacts proteins S9 and S11.

Its function is as follows. One of the primary rRNA binding proteins, it binds directly to 16S rRNA where it nucleates assembly of the head domain of the 30S subunit. Is located at the subunit interface close to the decoding center, probably blocks exit of the E-site tRNA. This is Small ribosomal subunit protein uS7 from Thermotoga maritima (strain ATCC 43589 / DSM 3109 / JCM 10099 / NBRC 100826 / MSB8).